The chain runs to 264 residues: 3-methyl-2-oxobutanoate hydroxymethyltransferase (264 aa).

Mg(2+) is bound by residues D45 and D84. 3-methyl-2-oxobutanoate contacts are provided by residues 45-46 (DS), D84, and K112. Mg(2+) is bound at residue E114. Residue E181 is the Proton acceptor of the active site.

This sequence belongs to the PanB family. In terms of assembly, homodecamer; pentamer of dimers. Requires Mg(2+) as cofactor.

The protein localises to the cytoplasm. It catalyses the reaction 3-methyl-2-oxobutanoate + (6R)-5,10-methylene-5,6,7,8-tetrahydrofolate + H2O = 2-dehydropantoate + (6S)-5,6,7,8-tetrahydrofolate. Its pathway is cofactor biosynthesis; (R)-pantothenate biosynthesis; (R)-pantoate from 3-methyl-2-oxobutanoate: step 1/2. In terms of biological role, catalyzes the reversible reaction in which hydroxymethyl group from 5,10-methylenetetrahydrofolate is transferred onto alpha-ketoisovalerate to form ketopantoate. The chain is 3-methyl-2-oxobutanoate hydroxymethyltransferase from Edwardsiella ictaluri (strain 93-146).